A 146-amino-acid chain; its full sequence is 3-dehydroquinate dehydratase (146 aa).

Residue Y24 is the Proton acceptor of the active site. Substrate-binding residues include N73, H79, and D86. H99 acts as the Proton donor in catalysis. Residues 100–101 (LS) and R110 contribute to the substrate site.

This sequence belongs to the type-II 3-dehydroquinase family. In terms of assembly, homododecamer.

The enzyme catalyses 3-dehydroquinate = 3-dehydroshikimate + H2O. The protein operates within metabolic intermediate biosynthesis; chorismate biosynthesis; chorismate from D-erythrose 4-phosphate and phosphoenolpyruvate: step 3/7. Functionally, catalyzes a trans-dehydration via an enolate intermediate. This is 3-dehydroquinate dehydratase from Shewanella baltica (strain OS223).